The primary structure comprises 216 residues: Large ribosomal subunit protein eL15 (216 aa).

This sequence belongs to the eukaryotic ribosomal protein eL15 family.

This chain is Large ribosomal subunit protein eL15, found in Metallosphaera sedula (strain ATCC 51363 / DSM 5348 / JCM 9185 / NBRC 15509 / TH2).